The chain runs to 205 residues: Meiotic nuclear division protein 1 homolog (205 aa).

S2 is modified (N-acetylserine). Residues 84-173 (HKLEVLESQL…EAANRWTDNI (90 aa)) adopt a coiled-coil conformation.

It belongs to the MND1 family. In terms of assembly, heterodimer with PSMC3IP/HOP2. MND1-PSMC3IP interacts with DMC1 and RAD51 and binds preferentially to dsDNA.

The protein resides in the nucleus. Its function is as follows. Required for proper homologous chromosome pairing and efficient cross-over and intragenic recombination during meiosis. Stimulates both DMC1- and RAD51-mediated homologous strand assimilation, which is required for the resolution of meiotic double-strand breaks. This Homo sapiens (Human) protein is Meiotic nuclear division protein 1 homolog.